Reading from the N-terminus, the 570-residue chain is Putative ABC transporter ATP-binding protein SACOL2708 (570 aa).

ABC transporter domains lie at 6–247 (ISFK…GIRE) and 304–537 (LELN…ASLR). Residues 40–47 (GASGSGKS) and 338–345 (GHNGAGKS) each bind ATP.

It belongs to the ABC transporter superfamily.

It is found in the cell membrane. Probably part of an ABC transporter complex. Responsible for energy coupling to the transport system. This chain is Putative ABC transporter ATP-binding protein SACOL2708, found in Staphylococcus aureus (strain COL).